A 251-amino-acid polypeptide reads, in one-letter code: 3-deoxy-manno-octulosonate cytidylyltransferase (251 aa).

The protein belongs to the KdsB family.

The protein resides in the cytoplasm. The catalysed reaction is 3-deoxy-alpha-D-manno-oct-2-ulosonate + CTP = CMP-3-deoxy-beta-D-manno-octulosonate + diphosphate. It functions in the pathway nucleotide-sugar biosynthesis; CMP-3-deoxy-D-manno-octulosonate biosynthesis; CMP-3-deoxy-D-manno-octulosonate from 3-deoxy-D-manno-octulosonate and CTP: step 1/1. It participates in bacterial outer membrane biogenesis; lipopolysaccharide biosynthesis. In terms of biological role, activates KDO (a required 8-carbon sugar) for incorporation into bacterial lipopolysaccharide in Gram-negative bacteria. This chain is 3-deoxy-manno-octulosonate cytidylyltransferase, found in Rhizobium etli (strain ATCC 51251 / DSM 11541 / JCM 21823 / NBRC 15573 / CFN 42).